The following is a 102-amino-acid chain: MQSQNIRIRLKAFDYRVLDASTQEIVNTAKRTGAQVRGPIPLPNKIEKFTVLRGPHIDKKSRDQWEIRTHKRLLDIVDPTPQTVDALMKLDLAAGVDVEIKV.

Belongs to the universal ribosomal protein uS10 family. Part of the 30S ribosomal subunit.

Functionally, involved in the binding of tRNA to the ribosomes. This Paracoccus denitrificans (strain Pd 1222) protein is Small ribosomal subunit protein uS10.